The sequence spans 543 residues: Rop guanine nucleotide exchange factor 11 (543 aa).

The interval 61–89 (QPGKCGSVDRPSLPIGGVTPNRNDKLPRV) is disordered. The PRONE domain maps to 95–456 (MEALIILQAA…QLTQEPTNNA (362 aa)).

As to quaternary structure, interacts with ARAC4/ROP2, ARAC3/ROP, ARAC9/ROP8, PHYA and PHYB. As to expression, highly expressed in elongating regions of roots and pollen grains. Expressed in flowers, and at lower levels in leaves and stems.

The protein localises to the cytoplasm. Guanine-nucleotide exchange factor (GEF) that acts as an activator of Rop (Rho of plants) GTPases by promoting the exchange of GDP for GTP. Functions as a light-signaling switch that functions in root growth and development through the activation of Rop in a phytochrome-dependent manner. May act as a negative regulator of phytochrome-mediated primary root development. This chain is Rop guanine nucleotide exchange factor 11 (ROPGEF11), found in Arabidopsis thaliana (Mouse-ear cress).